A 553-amino-acid polypeptide reads, in one-letter code: Imidazole glycerol phosphate synthase hisHF (553 aa).

The Glutamine amidotransferase type-1 domain maps to threonine 3–serine 223. Residues cysteine 81, histidine 194, and glutamate 196 each act as for GATase activity in the active site. A cyclase region spans residues leucine 232–valine 553. Active-site residues include aspartate 241 and aspartate 403.

In the C-terminal section; belongs to the HisA/HisF family.

The enzyme catalyses 5-[(5-phospho-1-deoxy-D-ribulos-1-ylimino)methylamino]-1-(5-phospho-beta-D-ribosyl)imidazole-4-carboxamide + L-glutamine = D-erythro-1-(imidazol-4-yl)glycerol 3-phosphate + 5-amino-1-(5-phospho-beta-D-ribosyl)imidazole-4-carboxamide + L-glutamate + H(+). It catalyses the reaction L-glutamine + H2O = L-glutamate + NH4(+). Its pathway is amino-acid biosynthesis; L-histidine biosynthesis; L-histidine from 5-phospho-alpha-D-ribose 1-diphosphate: step 5/9. Functionally, IGPS catalyzes the conversion of PRFAR and glutamine to IGP, AICAR and glutamate. The glutaminase domain produces the ammonia necessary for the cyclase domain to produce IGP and AICAR from PRFAR. The ammonia is channeled to the active site of the cyclase domain. The sequence is that of Imidazole glycerol phosphate synthase hisHF (hisHF) from Emericella nidulans (strain FGSC A4 / ATCC 38163 / CBS 112.46 / NRRL 194 / M139) (Aspergillus nidulans).